The primary structure comprises 527 residues: Rhamnogalacturonate lyase A (527 aa).

An N-terminal signal peptide occupies residues 1–19 (MLKASLLSFVAFTAQVAHA). 2 disulfides stabilise this stretch: Cys49–Cys92 and Cys183–Cys192. A glycan (N-linked (GlcNAc...) asparagine) is linked at Asn350.

The protein belongs to the polysaccharide lyase 4 family.

Its subcellular location is the secreted. The catalysed reaction is Endotype eliminative cleavage of L-alpha-rhamnopyranosyl-(1-&gt;4)-alpha-D-galactopyranosyluronic acid bonds of rhamnogalacturonan I domains in ramified hairy regions of pectin leaving L-rhamnopyranose at the reducing end and 4-deoxy-4,5-unsaturated D-galactopyranosyluronic acid at the non-reducing end.. Pectinolytic enzyme that has a positive effect in the apple hot-mash liquefaction process. This endolyase hydrolyzes the alpha-L-rhamnopyranosyl-(1,4)-alpha-D-galacturonopyranosyl glycosidic linkage by beta-elimination, thereby generating oligosaccharides terminating at the non-reducing end with a hex-4-enopyranosyluronic acid residue. This chain is Rhamnogalacturonate lyase A (rglA), found in Aspergillus aculeatus.